The primary structure comprises 385 residues: GPN-loop GTPase 1 (385 aa).

Position 13 to 18 (13 to 18 (GSGKTT)) interacts with GTP. The short motif at 70-72 (GPN) is the Gly-Pro-Asn (GPN)-loop; involved in dimer interface element. Position 173–176 (173–176 (NKTD)) interacts with GTP. A phosphoserine mark is found at Ser-304, Ser-308, and Ser-313. Residues 317 to 332 (EDANDGLVDRDEDEGV) show a composition bias toward acidic residues. The interval 317–356 (EDANDGLVDRDEDEGVEREYTFPGEERTKGEVNENSAPDL) is disordered. The span at 333–348 (EREYTFPGEERTKGEV) shows a compositional bias: basic and acidic residues. At Ser-352 the chain carries Phosphoserine. Lys-369 participates in a covalent cross-link: Glycyl lysine isopeptide (Lys-Gly) (interchain with G-Cter in ubiquitin).

The protein belongs to the GPN-loop GTPase family. As to quaternary structure, heterodimers with GPN2 or GPN3. Binds to RNA polymerase II (RNAPII) in a GTP-dependent manner. Interacts with nuclear pore protein NUP133 and nuclear export factor CRM1. Interacts with PCL1. Post-translationally, phosphorylated by the cyclin-CDK PCL1-PHO85.

The protein resides in the cytoplasm. In terms of biological role, small GTPase required for proper nuclear import of RNA polymerase II (RNAPII). May act at an RNAP assembly step prior to nuclear import. Promotes sister chromatid separation during anaphase. The polypeptide is GPN-loop GTPase 1 (Saccharomyces cerevisiae (strain ATCC 204508 / S288c) (Baker's yeast)).